The primary structure comprises 366 residues: tRNA/tmRNA (uracil-C(5))-methyltransferase (366 aa).

Positions 190, 218, 223, 239, and 299 each coordinate S-adenosyl-L-methionine. Cys324 functions as the Nucleophile in the catalytic mechanism. Glu358 functions as the Proton acceptor in the catalytic mechanism.

The protein belongs to the class I-like SAM-binding methyltransferase superfamily. RNA M5U methyltransferase family. TrmA subfamily.

It catalyses the reaction uridine(54) in tRNA + S-adenosyl-L-methionine = 5-methyluridine(54) in tRNA + S-adenosyl-L-homocysteine + H(+). The enzyme catalyses uridine(341) in tmRNA + S-adenosyl-L-methionine = 5-methyluridine(341) in tmRNA + S-adenosyl-L-homocysteine + H(+). Functionally, dual-specificity methyltransferase that catalyzes the formation of 5-methyluridine at position 54 (m5U54) in all tRNAs, and that of position 341 (m5U341) in tmRNA (transfer-mRNA). This Escherichia coli O6:H1 (strain CFT073 / ATCC 700928 / UPEC) protein is tRNA/tmRNA (uracil-C(5))-methyltransferase.